The following is a 90-amino-acid chain: uncharacterized protein (90 aa).

The tract at residues 53 to 90 (WRARPDANDADTTSSSSSSETCTESDDSSDVPPARYAV) is disordered. A compositionally biased stretch (low complexity) spans 63-74 (DTTSSSSSSETC).

This is an uncharacterized protein from Orgyia pseudotsugata (Douglas-fir tussock moth).